The chain runs to 456 residues: tRNA-2-methylthio-N(6)-dimethylallyladenosine synthase (456 aa).

The region spanning 19-137 is the MTTase N-terminal domain; the sequence is KHFFIETWGC…FPEYLHRVQV (119 aa). Residues Cys-28, Cys-64, Cys-98, Cys-174, Cys-178, and Cys-181 each coordinate [4Fe-4S] cluster. The 233-residue stretch at 160-392 folds into the Radical SAM core domain; it reads RKSNVKAFVT…AVNEGIVVGN (233 aa). The TRAM domain occupies 393–456; it reads KAAEGKIYEV…SFSLVGEVVE (64 aa).

Belongs to the methylthiotransferase family. MiaB subfamily. In terms of assembly, monomer. [4Fe-4S] cluster is required as a cofactor.

The protein localises to the cytoplasm. It catalyses the reaction N(6)-dimethylallyladenosine(37) in tRNA + (sulfur carrier)-SH + AH2 + 2 S-adenosyl-L-methionine = 2-methylsulfanyl-N(6)-dimethylallyladenosine(37) in tRNA + (sulfur carrier)-H + 5'-deoxyadenosine + L-methionine + A + S-adenosyl-L-homocysteine + 2 H(+). Functionally, catalyzes the methylthiolation of N6-(dimethylallyl)adenosine (i(6)A), leading to the formation of 2-methylthio-N6-(dimethylallyl)adenosine (ms(2)i(6)A) at position 37 in tRNAs that read codons beginning with uridine. The sequence is that of tRNA-2-methylthio-N(6)-dimethylallyladenosine synthase from Clostridium botulinum (strain Eklund 17B / Type B).